The following is a 606-amino-acid chain: Aspartate--tRNA(Asp/Asn) ligase (606 aa).

Residue E177 participates in L-aspartate binding. Positions 201 to 204 (QLFK) are aspartate. R223 provides a ligand contact to L-aspartate. ATP-binding positions include 223–225 (RDE) and Q232. Position 461 (H461) interacts with L-aspartate. E499 contributes to the ATP binding site. R506 lines the L-aspartate pocket. 551 to 554 (GMDR) is an ATP binding site.

It belongs to the class-II aminoacyl-tRNA synthetase family. Type 1 subfamily. Homodimer.

The protein resides in the cytoplasm. The catalysed reaction is tRNA(Asx) + L-aspartate + ATP = L-aspartyl-tRNA(Asx) + AMP + diphosphate. Aspartyl-tRNA synthetase with relaxed tRNA specificity since it is able to aspartylate not only its cognate tRNA(Asp) but also tRNA(Asn). Reaction proceeds in two steps: L-aspartate is first activated by ATP to form Asp-AMP and then transferred to the acceptor end of tRNA(Asp/Asn). This is Aspartate--tRNA(Asp/Asn) ligase from Prochlorococcus marinus (strain MIT 9313).